The primary structure comprises 493 residues: Cytochrome c-552 (493 aa).

Residues 1 to 25 (MEKKLKSWQGWLLFCGAMAVVFVLG) form the signal peptide. H116 contributes to the heme c binding site. Residues C144, C147, and K148 each contribute to the heme site. C182, C185, H186, C224, C227, and H228 together coordinate heme c. E230, Y231, K276, and Q278 together coordinate Ca(2+). Y231 contributes to the substrate binding site. Residue H279 coordinates substrate. 9 residues coordinate heme c: H290, C297, C300, H301, H315, C328, C331, H332, and H407.

The protein belongs to the cytochrome c-552 family. Requires Ca(2+) as cofactor. It depends on heme c as a cofactor.

It localises to the periplasm. It carries out the reaction 6 Fe(III)-[cytochrome c] + NH4(+) + 2 H2O = 6 Fe(II)-[cytochrome c] + nitrite + 8 H(+). It functions in the pathway nitrogen metabolism; nitrate reduction (assimilation). Catalyzes the reduction of nitrite to ammonia, consuming six electrons in the process. The sequence is that of Cytochrome c-552 from Bacteroides fragilis (strain YCH46).